A 224-amino-acid chain; its full sequence is Response regulator protein GraR (224 aa).

The 114-residue stretch at 2–115 folds into the Response regulatory domain; that stretch reads QILLVEDDNT…VLIAKLQAIY (114 aa). At Asp51 the chain carries 4-aspartylphosphate. Positions 126–224 form a DNA-binding region, ompR/PhoB-type; the sequence is KRTLTWQDAV…KVGKGYMAHE (99 aa). Thr128, Thr130, and Thr149 each carry phosphothreonine.

In terms of assembly, interacts with GraX. In terms of processing, phosphorylated by GraS. Phosphorylated by Stk1; phosphorylation increases the DNA-binding activity of GraR.

The protein localises to the cytoplasm. Member of the two-component regulatory system GraR/GraS involved in resistance against cationic antimicrobial peptides (CAMPs). Upon phosphorylation by GraS, functions as a transcription regulator by direct binding to promoter regions of target genes such as adhesins, exoproteins, transporters, toxins, and proteins involved in cell wall synthesis. Down-regulates the expression of many genes involved in RNA and amino acid synthesis or glycolysis. The polypeptide is Response regulator protein GraR (graR) (Staphylococcus aureus (strain USA300)).